Reading from the N-terminus, the 370-residue chain is MKDLKVTPLRGVYEEYGGKIVDFAGYELPTQFKGFLHEHHTVREKAGLFDVSHMGEAMVTGKDAGKFIQYLMTNDINVLKDNEVLYTFMCNEDGGVIDDLLVYKFAEDEFFLVINASNKDKDVKWIMDHKGDFDVEIVDVSDSIAQLAFQGPLAEEILQKIVDVDLQEIKFFKLKRDVLVNGKKCLVSRTGYTGEDGFEIYCKPEDAKGLWHAILNAGKEEGAQPIGLGARDTLRFEASLLLYGNEMDETITPLEVGMGFFAKLKIEEDFIGKDALIKQKAEGVTRKLVGFELLDKGIPRHGYEVIKDGKVIGHVTTGYKSPTLNKAIGLALVEEQYSKIGTEFNIKVRKKELKAVAIDKRFYTKKTKTK.

It belongs to the GcvT family. In terms of assembly, the glycine cleavage system is composed of four proteins: P, T, L and H.

It catalyses the reaction N(6)-[(R)-S(8)-aminomethyldihydrolipoyl]-L-lysyl-[protein] + (6S)-5,6,7,8-tetrahydrofolate = N(6)-[(R)-dihydrolipoyl]-L-lysyl-[protein] + (6R)-5,10-methylene-5,6,7,8-tetrahydrofolate + NH4(+). The glycine cleavage system catalyzes the degradation of glycine. The polypeptide is Aminomethyltransferase (Clostridium botulinum (strain ATCC 19397 / Type A)).